The primary structure comprises 424 residues: Bone morphogenetic protein 10 (424 aa).

An N-terminal signal peptide occupies residues 1 to 21 (MGSLVLTLCALFCLAAYLVSG). Positions 22–316 (SPIMNLEQSP…IYDSTARIRR (295 aa)) are excised as a propeptide. Residues Asn67 and Asn131 are each glycosylated (N-linked (GlcNAc...) asparagine). 3 disulfide bridges follow: Cys323/Cys389, Cys352/Cys421, and Cys356/Cys423.

This sequence belongs to the TGF-beta family. Homodimer; disulfide-linked. Interacts with FBN1 (via N-terminal domain) and FBN2. Interacts with ENG. Detected in mammary epithelia (at protein level).

It is found in the secreted. In terms of biological role, required for maintaining the proliferative activity of embryonic cardiomyocytes by preventing premature activation of the negative cell cycle regulator CDKN1C/p57KIP and maintaining the required expression levels of cardiogenic factors such as MEF2C and NKX2-5. Acts as a ligand for ACVRL1/ALK1, BMPR1A/ALK3 and BMPR1B/ALK6, leading to activation of SMAD1, SMAD5 and SMAD8 transcription factors. Inhibits endothelial cell migration and growth. May reduce cell migration and cell matrix adhesion in breast cancer cell lines. The polypeptide is Bone morphogenetic protein 10 (BMP10) (Homo sapiens (Human)).